Here is a 197-residue protein sequence, read N- to C-terminus: MDLSPVKEALAAKSFDKIADICDTLMLQVASEGIEYHDDWPYAIHLLGYFYVDDCDSARFLWKRIPTAIKERKPEVVAAWGIGQKLWTHDYAGVYEAIRGYDWSQEAKDMVAAFSDLYTKRMFQLLLSAYSTITIHDLALFLGMTEDDATTYVVENGWTVDAASQMASVKKQAVKREQKVDSSKLQRLTEYVFHLEH.

The 171-residue stretch at 20–190 folds into the PCI domain; it reads DICDTLMLQV…DSSKLQRLTE (171 aa).

It belongs to the CSN8 family. In terms of assembly, component of the CSN complex, probably composed of CSN1, CSN2, CSN3, CSN4, CSN5 (CSN5A or CSN5B), CSN6 (CSN6A or CSN6B), CSN7 and CSN8. In the complex, it probably interacts directly with CSN4. Interacts with itself and (via PCI domain) with CSN7 (via PCI domain). Interacts with COP10. Binds to the translation initiation factors TIF3E1 and TIF3H1. Ubiquitous.

It localises to the cytoplasm. The protein localises to the nucleus. Functionally, component of the COP9 signalosome complex (CSN), a complex involved in various cellular and developmental processes such as photomorphogenesis and auxin and jasmonate responses. The CSN complex is an essential regulator of the ubiquitin (Ubl) conjugation pathway by mediating the deneddylation of the cullin subunits of SCF-type E3 ligase complexes, leading to decrease the Ubl ligase activity of SCF. It is involved in repression of photomorphogenesis in darkness by regulating the activity of COP1-containing Ubl ligase complexes. The complex is also required for degradation of IAA6 by regulating the activity of the Ubl ligase SCF-TIR complex. The sequence is that of COP9 signalosome complex subunit 8 (CSN8) from Arabidopsis thaliana (Mouse-ear cress).